The sequence spans 844 residues: Elongation factor 2 (844 aa).

The tr-type G domain occupies 17-255 (TNVRNMSVIA…LWGDNYFNPK (239 aa)). 26 to 33 (AHVDHGKS) is a binding site for GTP. Residues Thr57 and Thr59 each carry the phosphothreonine modification. Residues 160-163 (NKVD) and 215-217 (SGL) contribute to the GTP site. A Diphthamide modification is found at His700.

It belongs to the TRAFAC class translation factor GTPase superfamily. Classic translation factor GTPase family. EF-G/EF-2 subfamily.

The protein localises to the cytoplasm. It carries out the reaction GTP + H2O = GDP + phosphate + H(+). In terms of biological role, catalyzes the GTP-dependent ribosomal translocation step during translation elongation. During this step, the ribosome changes from the pre-translocational (PRE) to the post-translocational (POST) state as the newly formed A-site-bound peptidyl-tRNA and P-site-bound deacylated tRNA move to the P and E sites, respectively. Catalyzes the coordinated movement of the two tRNA molecules, the mRNA and conformational changes in the ribosome. In Neurospora crassa (strain ATCC 24698 / 74-OR23-1A / CBS 708.71 / DSM 1257 / FGSC 987), this protein is Elongation factor 2 (cot-3).